Reading from the N-terminus, the 691-residue chain is WD repeat-containing protein 48 homolog (691 aa).

8 WD repeats span residues 27 to 82 (LHRS…PVQY), 88 to 130 (RHTD…YLDS), 133 to 168 (LHTD…NSNF), 180 to 219 (GCKN…KPMK), 222 to 261 (GHSD…NIAT), 264 to 303 (AHEE…KFQV), 306 to 347 (KEEA…QNSN), and 399 to 438 (SGAP…KVKE).

The protein belongs to the WD repeat WDR48 family. Interacts with usp-46; the interaction increases the catalytic activity of usp-46 in the presence of wdr-20.

In terms of biological role, together with wdr-20, binds to and stimulates the activity of the deubiquitinating enzyme usp-46, leading to deubiquitination and stabilization of the glr-1 glutamate receptor. The protein is WD repeat-containing protein 48 homolog (wdr-48) of Caenorhabditis briggsae.